Here is a 229-residue protein sequence, read N- to C-terminus: Secretory carrier-associated membrane protein 4 (229 aa).

The Cytoplasmic segment spans residues 1 to 39 (MSEKENNFPPLPKFIPVKPCFYQNFSDEIPVEHQVLVKR). 4 helical membrane-spanning segments follow: residues 40 to 60 (IYRL…ACLA), 61 to 81 (WWIG…LLLF), 105 to 125 (FMAF…QAIG), and 149 to 169 (VVML…AIAI). Residues 170 to 229 (MKVHRIYRGAGGSFQKAQTEWNTGTWRNPPSREAQYNNFSGNSLPEYPTVPSYPGSGQWP) lie on the Cytoplasmic side of the membrane. T194 is modified (phosphothreonine). The interval 208–229 (FSGNSLPEYPTVPSYPGSGQWP) is disordered.

This sequence belongs to the SCAMP family.

Its subcellular location is the membrane. Functionally, probably involved in membrane protein trafficking. The chain is Secretory carrier-associated membrane protein 4 (SCAMP4) from Pongo abelii (Sumatran orangutan).